Reading from the N-terminus, the 1087-residue chain is Error-prone DNA polymerase 3 (1087 aa).

A disordered region spans residues 1040 to 1064; that stretch reads AGRGDEFAHGSPGSSDTRDKSKPVV.

Belongs to the DNA polymerase type-C family. DnaE2 subfamily.

It is found in the cytoplasm. The catalysed reaction is DNA(n) + a 2'-deoxyribonucleoside 5'-triphosphate = DNA(n+1) + diphosphate. DNA polymerase involved in damage-induced mutagenesis and translesion synthesis (TLS). It is not the major replicative DNA polymerase. The sequence is that of Error-prone DNA polymerase 3 from Agrobacterium fabrum (strain C58 / ATCC 33970) (Agrobacterium tumefaciens (strain C58)).